Consider the following 352-residue polypeptide: Ketoisovalerate oxidoreductase subunit VorB (352 aa).

In terms of assembly, heterotrimer of the VorA, VorB and VorC subunits.

The catalysed reaction is 3-methyl-2-oxobutanoate + 2 oxidized [2Fe-2S]-[ferredoxin] + CoA = 2-methylpropanoyl-CoA + 2 reduced [2Fe-2S]-[ferredoxin] + CO2 + H(+). This is Ketoisovalerate oxidoreductase subunit VorB (vorB) from Methanothermobacter thermautotrophicus (strain ATCC 29096 / DSM 1053 / JCM 10044 / NBRC 100330 / Delta H) (Methanobacterium thermoautotrophicum).